The primary structure comprises 86 residues: Acyl-CoA-binding protein homolog 1 (86 aa).

The region spanning 1-86 (MTLSFDDAAA…VEELIAKYGA (86 aa)) is the ACB domain. An acyl-CoA-binding positions include Lys13, 28 to 32 (YALFK), Lys50, Lys54, and Tyr73.

This sequence belongs to the ACBP family.

In terms of biological role, binds medium- and long-chain acyl-CoA esters with very high affinity and may function as an intracellular carrier of acyl-CoA esters. The sequence is that of Acyl-CoA-binding protein homolog 1 (acbp-1) from Caenorhabditis elegans.